A 66-amino-acid chain; its full sequence is uncharacterized protein (66 aa).

The chain crosses the membrane as a helical span at residues 32 to 49 (WAFSLLIAGSAFLWIYMR).

It is found in the membrane. This is an uncharacterized protein from Bacillus subtilis (strain 168).